A 254-amino-acid chain; its full sequence is Mitochondrial inner membrane protease ATP23 homolog (254 aa).

Residues 1–32 (MAQSGAKAADLSREPPGEQKPSPSSRQNEEDL) are disordered. Residue His-133 participates in a divalent metal cation binding. The active site involves Glu-134. Residue His-137 participates in a divalent metal cation binding.

The protein belongs to the peptidase M76 family.

The protein is Mitochondrial inner membrane protease ATP23 homolog (atp23) of Danio rerio (Zebrafish).